The chain runs to 101 residues: Phosphoribosyl-AMP cyclohydrolase (101 aa).

Mg(2+) is bound at residue aspartate 71. Cysteine 72 lines the Zn(2+) pocket. Residues aspartate 73 and aspartate 75 each contribute to the Mg(2+) site. Zn(2+) is bound by residues cysteine 88 and cysteine 95.

This sequence belongs to the PRA-CH family. Homodimer. Requires Mg(2+) as cofactor. It depends on Zn(2+) as a cofactor.

The protein resides in the cytoplasm. It carries out the reaction 1-(5-phospho-beta-D-ribosyl)-5'-AMP + H2O = 1-(5-phospho-beta-D-ribosyl)-5-[(5-phospho-beta-D-ribosylamino)methylideneamino]imidazole-4-carboxamide. Its pathway is amino-acid biosynthesis; L-histidine biosynthesis; L-histidine from 5-phospho-alpha-D-ribose 1-diphosphate: step 3/9. Catalyzes the hydrolysis of the adenine ring of phosphoribosyl-AMP. In Bacillus cereus (strain AH820), this protein is Phosphoribosyl-AMP cyclohydrolase.